An 80-amino-acid polypeptide reads, in one-letter code: Acyl carrier protein (80 aa).

The Carrier domain maps to aspartate 4–lysine 79. O-(pantetheine 4'-phosphoryl)serine is present on serine 39.

Belongs to the acyl carrier protein (ACP) family. Post-translationally, 4'-phosphopantetheine is transferred from CoA to a specific serine of apo-ACP by AcpS. This modification is essential for activity because fatty acids are bound in thioester linkage to the sulfhydryl of the prosthetic group.

It localises to the cytoplasm. It participates in lipid metabolism; fatty acid biosynthesis. Functionally, carrier of the growing fatty acid chain in fatty acid biosynthesis. The sequence is that of Acyl carrier protein from Borrelia garinii subsp. bavariensis (strain ATCC BAA-2496 / DSM 23469 / PBi) (Borreliella bavariensis).